A 576-amino-acid chain; its full sequence is Arginine--tRNA ligase (576 aa).

Positions 122–132 match the 'HIGH' region motif; the sequence is PNVAKEMHVGH.

Belongs to the class-I aminoacyl-tRNA synthetase family. In terms of assembly, monomer.

It is found in the cytoplasm. The enzyme catalyses tRNA(Arg) + L-arginine + ATP = L-arginyl-tRNA(Arg) + AMP + diphosphate. This chain is Arginine--tRNA ligase, found in Serratia proteamaculans (strain 568).